Here is a 387-residue protein sequence, read N- to C-terminus: Probable protein phosphatase 2C 25 (387 aa).

The PPM-type phosphatase domain maps to 52–351 (EFSFAVVQAN…DDITVVVVYI (300 aa)). 4 residues coordinate Mn(2+): Asp83, Gly84, Asp283, and Asp342.

It belongs to the PP2C family. Mg(2+) is required as a cofactor. Requires Mn(2+) as cofactor.

The enzyme catalyses O-phospho-L-seryl-[protein] + H2O = L-seryl-[protein] + phosphate. The catalysed reaction is O-phospho-L-threonyl-[protein] + H2O = L-threonyl-[protein] + phosphate. This Oryza sativa subsp. japonica (Rice) protein is Probable protein phosphatase 2C 25.